Here is a 202-residue protein sequence, read N- to C-terminus: UPF0316 protein SH1041 (202 aa).

3 helical membrane passes run 8–28, 40–60, and 66–86; these read PWSMVLAIFVINVFYVTFLTM, MAAAVSFLEVLVYVVGLGMVM, and IQNIFAYAFGFSIGILVGMKI.

It belongs to the UPF0316 family.

It localises to the cell membrane. The sequence is that of UPF0316 protein SH1041 from Staphylococcus haemolyticus (strain JCSC1435).